We begin with the raw amino-acid sequence, 305 residues long: Ribosomal RNA small subunit methyltransferase H (305 aa).

S-adenosyl-L-methionine-binding positions include 47–49, D66, F93, D108, and Q115; that span reads GGH.

The protein belongs to the methyltransferase superfamily. RsmH family.

It localises to the cytoplasm. It carries out the reaction cytidine(1402) in 16S rRNA + S-adenosyl-L-methionine = N(4)-methylcytidine(1402) in 16S rRNA + S-adenosyl-L-homocysteine + H(+). In terms of biological role, specifically methylates the N4 position of cytidine in position 1402 (C1402) of 16S rRNA. In Prochlorococcus marinus (strain MIT 9211), this protein is Ribosomal RNA small subunit methyltransferase H.